The following is a 488-amino-acid chain: 5'-3' exonuclease PLD3 (488 aa).

Residues Met1–Trp38 lie on the Cytoplasmic side of the membrane. A helical; Signal-anchor for type II membrane protein transmembrane segment spans residues Val39 to Leu59. Over Trp60–Leu488 the chain is Lumenal. Disulfide bonds link Cys77-Cys237 and Cys81-Cys235. Asn97 and Asn132 each carry an N-linked (GlcNAc...) asparagine glycan. A PLD phosphodiesterase 1 domain is found at Thr194–Ser221. Residues His199, Lys201, and Asp206 contribute to the active site. The active-site Proton donor is the His199. His199 and Lys201 together coordinate phosphate. Asn216 serves as a coordination point for phosphate. Asn234, Asn282, and Asn385 each carry an N-linked (GlcNAc...) asparagine glycan. Residues Cys364 and Cys485 are joined by a disulfide bond. One can recognise a PLD phosphodiesterase 2 domain in the interval Tyr409–Tyr435. Residue His414 participates in phosphate binding. Catalysis depends on His414, which acts as the Nucleophile. Phe436 provides a ligand contact to Mg(2+).

The protein belongs to the phospholipase D family. In terms of assembly, homodimer. Interacts with APP. N-glycosylated. In terms of processing, proteolytically processed to a soluble form that is stable within endosomes and lysosomes. During transport through the secretory pathway becomes proteolysed by cysteine proteases, thereby releasing a stable soluble lysosomal lumenal polypeptide, whereas the transmembrane-bound fragment is rapidly degraded. Its transport route to lysosomes involves ubiquitination and the ESCRT complex. Post-translationally, ubiquitinated. Ubiquitination mediates sorting into lysosomes.

It is found in the endoplasmic reticulum membrane. The protein resides in the lysosome lumen. Its subcellular location is the early endosome membrane. It localises to the late endosome membrane. The protein localises to the golgi apparatus membrane. It is found in the endosome membrane. The enzyme catalyses Exonucleolytic cleavage in the 5'- to 3'-direction to yield nucleoside 3'-phosphates.. It catalyses the reaction a 5'-end 5'-dephospho-ribonucleotidyl-ribonucleotide-RNA + H2O = a ribonucleoside 3'-phosphate + a 5'-end dephospho-ribonucleoside-RNA + H(+). The catalysed reaction is a ribonucleoside 3'-phosphate-2'-3'-cyclophospho-GMP + H2O = a ribonucleoside 3'-phosphate + 2',3'-cyclophospho-GMP + H(+). It carries out the reaction a 5'-end 5'-dephospho-2'-deoxyribonucleotidyl-2'-deoxyribonucleotide in single-stranded DNA + H2O = a 5'-end dephospho-2'-deoxyribonucleoside in single-stranded DNA + a 2'-deoxyribonucleoside 3'-phosphate + H(+). The enzyme catalyses a 5'-end 5'-phospho-2'-deoxyribonucleotide in single-stranded DNA + H2O = a 5'-end 5'-dephospho-2'-deoxyribonucleotide in single-stranded DNA + phosphate. It catalyses the reaction a 3-lyso-sn-glycero-1-phospho-(3'-acyl-1'-sn-glycerol) + a 1-acyl-sn-glycerol = a 3-acyl-sn-glycero-1-phospho-(3'-acyl-1'-sn-glycerol) + glycerol. The catalysed reaction is 3-lyso-sn-glycero-1-phospho-(3'-(9Z-octadecenoyl)-1'-sn-glycerol) + 1-(9Z-octadecenoyl)-sn-glycerol = 3-(9Z-octadecenoyl)-sn-glycero-1-phospho-(3'-(9Z-octadecenoyl)-1'-sn-glycerol) + glycerol. In terms of biological role, 5'-&gt;3' exonuclease that hydrolyzes the phosphodiester bond of single-stranded DNA (ssDNA) and RNA molecules to form nucleoside 3'-monophosphates and 5'-end 5'-hydroxy deoxyribonucleotide/ribonucleotide fragments. Partially redundant with PLD4, can cleave all four nucleotides displaying higher efficiency for ssDNA and RNA fragments initiated with uridine and guanosine residues and lower efficiency for cytidine-initiated substrates. As a result, it does not always degrade polynucleotides to the single nucleotide level, it can stall at specific sites sparing certain fragments from exonucleolytic degradation. Processes self and pathogenic ssDNA and RNA molecules that reach the endolysosomal compartment via phagocytosis or autophagy and may serve as 'danger' signals for recognition by innate immune receptors such as toll-like receptors (TLRs). Degrades mitochondrial CpG-rich ssDNA fragments to prevent TLR9 activation and autoinflammatory response, but it can cleave viral RNA to generate ligands for TLR7 activation and initiate antiviral immune responses. In plasmacytoid dendritic cells, it cooperates with endonuclease RNASET2 to release 2',3'-cyclic guanosine monophosphate (2',3'-cGMP), a potent stimulatory ligand for TLR7. Produces 2',3'-cGMPs and cytidine-rich RNA fragments that occupy TLR7 ligand-binding pockets and trigger a signaling-competent state. Can exert polynucleotide phosphatase activity toward 5'-phosphorylated ssDNA substrates although at a slow rate. Transphosphatidylase that catalyzes the exchange with R to S stereo-inversion of the glycerol moiety between (S,R)-lysophosphatidylglycerol (LPG) and monoacylglycerol (MAG) substrates to yield (S,S)-bis(monoacylglycero)phosphate (BMP). Can synthesize a variety of (S,S)-BMPs representing the main phospholipid constituent of lysosomal intralumenal vesicle (ILV) membranes that bind acid hydrolases for lipid degradation. Regulates the homeostasis and interorganellar communication of the endolysosomal system with an overall impact on cellular removal of dysfunctional organelles via autophagy as well as proper protein and lipid turnover. May play a role in myotube formation in response to ER stress. This is 5'-3' exonuclease PLD3 (Pld3) from Rattus norvegicus (Rat).